A 482-amino-acid chain; its full sequence is Ribulose bisphosphate carboxylase large chain (482 aa).

Positions 1 to 2 (MS) are excised as a propeptide. Proline 3 is modified (N-acetylproline). At lysine 14 the chain carries N6,N6,N6-trimethyllysine. Substrate-binding residues include asparagine 123 and threonine 173. The active-site Proton acceptor is lysine 175. Lysine 177 is a binding site for substrate. 3 residues coordinate Mg(2+): lysine 201, aspartate 203, and glutamate 204. Lysine 201 bears the N6-carboxylysine mark. The active-site Proton acceptor is histidine 294. Substrate-binding residues include arginine 295, histidine 327, and serine 379.

The protein belongs to the RuBisCO large chain family. Type I subfamily. As to quaternary structure, heterohexadecamer of 8 large chains and 8 small chains; disulfide-linked. The disulfide link is formed within the large subunit homodimers. The cofactor is Mg(2+). In terms of processing, the disulfide bond which can form in the large chain dimeric partners within the hexadecamer appears to be associated with oxidative stress and protein turnover.

Its subcellular location is the plastid. The protein localises to the chloroplast. It catalyses the reaction 2 (2R)-3-phosphoglycerate + 2 H(+) = D-ribulose 1,5-bisphosphate + CO2 + H2O. The enzyme catalyses D-ribulose 1,5-bisphosphate + O2 = 2-phosphoglycolate + (2R)-3-phosphoglycerate + 2 H(+). In terms of biological role, ruBisCO catalyzes two reactions: the carboxylation of D-ribulose 1,5-bisphosphate, the primary event in carbon dioxide fixation, as well as the oxidative fragmentation of the pentose substrate in the photorespiration process. Both reactions occur simultaneously and in competition at the same active site. This chain is Ribulose bisphosphate carboxylase large chain, found in Stegnosperma halimifolium.